The chain runs to 529 residues: MSSGLIYISLEVLVACLITALIMYYVMKKIYYARGQAILKGASAKAKLMEFQAKSFVEAEEMRMKSQECKLQQQYENKNLQLQTHFDKKEAHLKHLEAQHKEFVRDEKRYLEKEKKELEKERQILEQERENFKKQRAICKEAQAKALDAMLNYMAYTKDEIKSMILEQLEEELEAQKSALIRRYEKEAKEEGKKKSYAILAEATARFAGDYATENLTSRIALPCSDYVGRVIGKDGKNIEAFKKISGVDIEFSEDSSELCLSSFNIYRREVASETIKILIEDGRIQPNRIEEVYHRVARNMEKELLSEGESVVLELELGTMEDELKILIGKMRYRFSFGQNALQHSKEVALLAGLIAEQLGGDKKLARRAGILHDIGKALTQELGRDHVNLGVEVCKRHKEDPVVINAIYAHHGHEEIMSVECASVCAADALSAGRPGARRKSDEEYAKRMQALEEIALEFDGVEKAYAMESGRELRVIVKSNQVRDNQVPIIARKIAKRIEESTQYVGEVGVQVVRENRFKTTATLKQ.

A helical transmembrane segment spans residues 4 to 24; the sequence is GLIYISLEVLVACLITALIMY. The 82-residue stretch at 216 to 297 folds into the KH domain; that stretch reads LTSRIALPCS…NRIEEVYHRV (82 aa). Residues 342-435 enclose the HD domain; sequence ALQHSKEVAL…VCAADALSAG (94 aa).

The protein belongs to the RNase Y family.

It localises to the cell membrane. Its function is as follows. Endoribonuclease that initiates mRNA decay. This is Ribonuclease Y from Helicobacter pylori (strain J99 / ATCC 700824) (Campylobacter pylori J99).